Here is a 132-residue protein sequence, read N- to C-terminus: Large ribosomal subunit protein uL14 (132 aa).

The protein belongs to the universal ribosomal protein uL14 family. In terms of assembly, part of the 50S ribosomal subunit. Forms a cluster with proteins L3 and L24e, part of which may contact the 16S rRNA in 2 intersubunit bridges.

Its function is as follows. Binds to 23S rRNA. Forms part of two intersubunit bridges in the 70S ribosome. The polypeptide is Large ribosomal subunit protein uL14 (Natronomonas pharaonis (strain ATCC 35678 / DSM 2160 / CIP 103997 / JCM 8858 / NBRC 14720 / NCIMB 2260 / Gabara) (Halobacterium pharaonis)).